The sequence spans 353 residues: Photosystem II protein D1 (353 aa).

Residue Thr-2 is modified to N-acetylthreonine. The residue at position 2 (Thr-2) is a Phosphothreonine. 3 helical membrane passes run 29 to 46, 118 to 133, and 142 to 156; these read YIGW…TATS, HFLL…EWEL, and WIAV…AAAA. His-118 contacts chlorophyll a. Tyr-126 contacts pheophytin a. [CaMn4O5] cluster-binding residues include Asp-170 and Glu-189. A helical transmembrane segment spans residues 197-218; sequence FHMLGVAGVFGGSLFSAMHGSL. His-198 serves as a coordination point for chlorophyll a. A quinone is bound by residues His-215 and 264 to 265; that span reads SF. His-215 lines the Fe cation pocket. Fe cation is bound at residue His-272. A helical membrane pass occupies residues 274 to 288; the sequence is FLAAWPVVGIWFTAL. The [CaMn4O5] cluster site is built by His-332, Glu-333, Asp-342, and Ala-344. A propeptide spanning residues 345–353 is cleaved from the precursor; it reads AVEAPSTNG.

The protein belongs to the reaction center PufL/M/PsbA/D family. In terms of assembly, PSII is composed of 1 copy each of membrane proteins PsbA, PsbB, PsbC, PsbD, PsbE, PsbF, PsbH, PsbI, PsbJ, PsbK, PsbL, PsbM, PsbT, PsbX, PsbY, PsbZ, Psb30/Ycf12, at least 3 peripheral proteins of the oxygen-evolving complex and a large number of cofactors. It forms dimeric complexes. The cofactor is The D1/D2 heterodimer binds P680, chlorophylls that are the primary electron donor of PSII, and subsequent electron acceptors. It shares a non-heme iron and each subunit binds pheophytin, quinone, additional chlorophylls, carotenoids and lipids. D1 provides most of the ligands for the Mn4-Ca-O5 cluster of the oxygen-evolving complex (OEC). There is also a Cl(-1) ion associated with D1 and D2, which is required for oxygen evolution. The PSII complex binds additional chlorophylls, carotenoids and specific lipids.. Tyr-161 forms a radical intermediate that is referred to as redox-active TyrZ, YZ or Y-Z. Post-translationally, C-terminally processed by CTPA; processing is essential to allow assembly of the oxygen-evolving complex and thus photosynthetic growth.

Its subcellular location is the plastid. It localises to the chloroplast thylakoid membrane. It catalyses the reaction 2 a plastoquinone + 4 hnu + 2 H2O = 2 a plastoquinol + O2. In terms of biological role, photosystem II (PSII) is a light-driven water:plastoquinone oxidoreductase that uses light energy to abstract electrons from H(2)O, generating O(2) and a proton gradient subsequently used for ATP formation. It consists of a core antenna complex that captures photons, and an electron transfer chain that converts photonic excitation into a charge separation. The D1/D2 (PsbA/PsbD) reaction center heterodimer binds P680, the primary electron donor of PSII as well as several subsequent electron acceptors. This chain is Photosystem II protein D1, found in Nandina domestica (Heavenly bamboo).